We begin with the raw amino-acid sequence, 158 residues long: Endoribonuclease YbeY (158 aa).

Residues His-117, His-121, and His-127 each coordinate Zn(2+).

Belongs to the endoribonuclease YbeY family. Zn(2+) serves as cofactor.

The protein localises to the cytoplasm. In terms of biological role, single strand-specific metallo-endoribonuclease involved in late-stage 70S ribosome quality control and in maturation of the 3' terminus of the 16S rRNA. In Buchnera aphidicola subsp. Schizaphis graminum (strain Sg), this protein is Endoribonuclease YbeY.